Reading from the N-terminus, the 398-residue chain is uncharacterized protein (398 aa).

This is an uncharacterized protein from Neisseria meningitidis serogroup B (strain ATCC BAA-335 / MC58).